A 492-amino-acid polypeptide reads, in one-letter code: GTPase-activating protein MSB4 (492 aa).

A Rab-GAP TBC domain is found at 147 to 367; sequence GIPAEWRGNA…RIWDCLFYEE (221 aa).

The protein localises to the cytoplasm. It localises to the bud. The protein resides in the bud neck. Functionally, regulates exocytosis by functioning as a GAP for SEC4. Also required for efficient polarization of the actin patches. In Saccharomyces cerevisiae (strain ATCC 204508 / S288c) (Baker's yeast), this protein is GTPase-activating protein MSB4 (MSB4).